The chain runs to 343 residues: Putative MO25-like protein At4g17270 (343 aa).

This sequence belongs to the Mo25 family.

The sequence is that of Putative MO25-like protein At4g17270 from Arabidopsis thaliana (Mouse-ear cress).